Reading from the N-terminus, the 928-residue chain is G-protein coupled receptor family C group 6 member A (928 aa).

Positions 1–20 are cleaved as a signal peptide; sequence MALSFVFITCFMILLDTSQS. Over 21–594 the chain is Extracellular; sequence CHTPDDFVAI…EYLDWDDSLA (574 aa). N-linked (GlcNAc...) asparagine glycans are attached at residues Asn332 and Asn555. A helical transmembrane segment spans residues 595-615; the sequence is LLLIALSLLGIAFVLAVGIIF. Residues 616–630 lie on the Cytoplasmic side of the membrane; the sequence is TRNLKTPVVKSSGGL. The helical transmembrane segment at 631-651 threads the bilayer; the sequence is VVCYVMLACHALNFASTGFFI. The Extracellular portion of the chain corresponds to 652–669; sequence GEPQDFTCKTRQTLFGVS. Residues 670–690 form a helical membrane-spanning segment; the sequence is FTLCVSCILTKSLKILLAFSF. Residues 691-706 are Cytoplasmic-facing; that stretch reads DPTLKTFLKCLYRPVP. The chain crosses the membrane as a helical span at residues 707–727; that stretch reads IVLTCTGIQVVICTLWLVLAA. Topologically, residues 728–750 are extracellular; sequence PTVEENTSLPRVIILECEEGSAL. Residues 751–771 traverse the membrane as a helical segment; it reads AFGTMLGYIAVLAFICFVFAF. Residues 772–784 are Cytoplasmic-facing; it reads KGRKLPENYNEAK. Residues 785-805 form a helical membrane-spanning segment; that stretch reads FLTFGMLIYFIAWITFIPVYA. The Extracellular portion of the chain corresponds to 806-812; sequence TTFGKYL. The chain crosses the membrane as a helical span at residues 813 to 833; the sequence is PAVEIIVILISNYGILCCTFF. The Cytoplasmic portion of the chain corresponds to 834–928; it reads PKCYIILCKQ…TLHQKRSSSI (95 aa).

It belongs to the G-protein coupled receptor 3 family. In terms of assembly, homodimer; disulfide-linked. Post-translationally, N-glycosylated. In terms of tissue distribution, high expression in soft palate. Weak expression in kidney, liver, lung and brain. No expression detected in heart, testis, skeletal muscle amd spleen.

It localises to the cell membrane. Receptor activated by multiple ligands, including osteocalcin (BGLAP), basic amino acids, and various cations. Activated by amino acids with a preference for basic amino acids such as L-Lys, L-Arg and L-ornithine but also by small and polar amino acids. The L-alpha amino acids respond is augmented by divalent cations Ca(2+) and Mg(2+). Seems to act through a G(q)/G(11) and G(i)-coupled pathway. Regulates testosterone production by acting as a ligand for uncarboxylated osteocalcin hormone: osteocalcin-binding at the surface of Leydig cells initiates a signaling response that promotes the expression of enzymes required for testosterone synthesis in a CREB-dependent manner. Mediates the non-genomic effects of androgens in multiple tissue. May coordinate nutritional and hormonal anabolic signals through the sensing of extracellular amino acids, osteocalcin, divalent ions and its responsiveness to anabolic steroids. The sequence is that of G-protein coupled receptor family C group 6 member A (Gprc6a) from Rattus norvegicus (Rat).